We begin with the raw amino-acid sequence, 498 residues long: Glutathione hydrolase 6 (498 aa).

Over 1–49 the chain is Cytoplasmic; that stretch reads MDATTGAVLYQKLQLWEPGMESEEEEEEEEIAEPLVLSLRRLQNTPGNK. A helical; Signal-anchor for type II membrane protein transmembrane segment spans residues 50–70; it reads VGGLPGAWTRLLAGLLLLAVS. Over 71–498 the chain is Extracellular; that stretch reads SSLALRQLQG…PSGCCPFQGY (428 aa). N-linked (GlcNAc...) asparagine glycans are attached at residues Asn-162, Asn-167, and Asn-376.

It belongs to the gamma-glutamyltransferase family. Heterodimer composed of the light and heavy chains. The active site is located in the light chain. Post-translationally, cleaved by autocatalysis into a large and a small subunit and the autocatalytic cleavage is essential to the functional activation of the enzyme.

It is found in the membrane. It carries out the reaction an N-terminal (5-L-glutamyl)-[peptide] + an alpha-amino acid = 5-L-glutamyl amino acid + an N-terminal L-alpha-aminoacyl-[peptide]. It catalyses the reaction glutathione + H2O = L-cysteinylglycine + L-glutamate. The catalysed reaction is an S-substituted glutathione + H2O = an S-substituted L-cysteinylglycine + L-glutamate. The protein operates within sulfur metabolism; glutathione metabolism. In terms of biological role, hydrolyzes and transfers gamma-glutamyl moieties from glutathione and other gamma-glutamyl compounds to acceptors. This Rattus norvegicus (Rat) protein is Glutathione hydrolase 6.